Here is a 546-residue protein sequence, read N- to C-terminus: Chaperonin GroEL (546 aa).

Residues 29–32, lysine 50, 86–90, glycine 414, and aspartate 492 contribute to the ATP site; these read TMGP and DGTTT.

Belongs to the chaperonin (HSP60) family. Forms a cylinder of 14 subunits composed of two heptameric rings stacked back-to-back. Interacts with the co-chaperonin GroES.

The protein resides in the cytoplasm. It catalyses the reaction ATP + H2O + a folded polypeptide = ADP + phosphate + an unfolded polypeptide.. In terms of biological role, together with its co-chaperonin GroES, plays an essential role in assisting protein folding. The GroEL-GroES system forms a nano-cage that allows encapsulation of the non-native substrate proteins and provides a physical environment optimized to promote and accelerate protein folding. The sequence is that of Chaperonin GroEL from Helicobacter acinonychis (strain Sheeba).